The primary structure comprises 100 residues: Small ribosomal subunit protein uS14 (100 aa).

Belongs to the universal ribosomal protein uS14 family. As to quaternary structure, part of the 30S ribosomal subunit. Contacts proteins S3 and S10.

In terms of biological role, binds 16S rRNA, required for the assembly of 30S particles and may also be responsible for determining the conformation of the 16S rRNA at the A site. This is Small ribosomal subunit protein uS14 from Nostoc sp. (strain PCC 7120 / SAG 25.82 / UTEX 2576).